The chain runs to 274 residues: HTH-type transcriptional regulator GadX (274 aa).

Residues 145–242 (TRVCTVINNN…GMTPTEYQER (98 aa)) form the HTH araC/xylS-type domain. 2 consecutive DNA-binding regions (H-T-H motif) follow at residues 162-183 (ARIASELLMSPSLLKKKLREEE) and 209-232 (IKRVAVSCGYHSVSYFIYVFRNYY).

Homodimer.

In terms of biological role, positively regulates the expression of about fifteen genes involved in acid resistance such as gadA, gadB and gadC. Depending on the conditions (growth phase and medium), can repress gadW. This chain is HTH-type transcriptional regulator GadX (gadX), found in Escherichia coli (strain K12).